The sequence spans 119 residues: Beta-2-microglobulin (119 aa).

The signal sequence occupies residues 1-20 (MFRSVALAVLALLFLSGLEA). Residues 25–114 (PKIQVYSRHP…VTLSGPRTVK (90 aa)) enclose the Ig-like C1-type domain. Residues Cys-45 and Cys-100 are joined by a disulfide bond.

The protein belongs to the beta-2-microglobulin family. In terms of assembly, heterodimer of an alpha chain and a beta chain. Beta-2-microglobulin is the beta-chain of major histocompatibility complex class I molecules.

It is found in the secreted. Its function is as follows. Component of the class I major histocompatibility complex (MHC). Involved in the presentation of peptide antigens to the immune system. In Chlorocebus aethiops (Green monkey), this protein is Beta-2-microglobulin (B2M).